The primary structure comprises 765 residues: Protein transport protein sec23-2 (765 aa).

Zn(2+) is bound by residues C56, C60, C79, and C82. S565 and S566 each carry phosphoserine.

It belongs to the SEC23/SEC24 family. SEC23 subfamily. In terms of assembly, the COPII coat is composed of at least 5 proteins: the sec23/24 complex, the sec13/31 complex, and the protein sar1.

It localises to the cytoplasm. It is found in the cytoplasmic vesicle. The protein localises to the COPII-coated vesicle membrane. Its subcellular location is the endoplasmic reticulum membrane. The protein resides in the golgi apparatus membrane. In terms of biological role, component of the coat protein complex II (COPII) which promotes the formation of transport vesicles from the endoplasmic reticulum (ER). The coat has two main functions, the physical deformation of the endoplasmic reticulum membrane into vesicles and the selection of cargo molecules. The sequence is that of Protein transport protein sec23-2 (sec232) from Schizosaccharomyces pombe (strain 972 / ATCC 24843) (Fission yeast).